The sequence spans 451 residues: UDP-N-acetylmuramoylalanine--D-glutamate ligase (451 aa).

116–122 (GTNGKTT) lines the ATP pocket.

The protein belongs to the MurCDEF family.

The protein localises to the cytoplasm. It catalyses the reaction UDP-N-acetyl-alpha-D-muramoyl-L-alanine + D-glutamate + ATP = UDP-N-acetyl-alpha-D-muramoyl-L-alanyl-D-glutamate + ADP + phosphate + H(+). It participates in cell wall biogenesis; peptidoglycan biosynthesis. Functionally, cell wall formation. Catalyzes the addition of glutamate to the nucleotide precursor UDP-N-acetylmuramoyl-L-alanine (UMA). The chain is UDP-N-acetylmuramoylalanine--D-glutamate ligase from Clostridioides difficile (strain 630) (Peptoclostridium difficile).